The following is a 428-amino-acid chain: Serine--tRNA ligase (428 aa).

235 to 237 (TAE) provides a ligand contact to L-serine. 266–268 (RSE) contacts ATP. Glutamate 289 provides a ligand contact to L-serine. 353 to 356 (EISS) serves as a coordination point for ATP. Serine 389 lines the L-serine pocket.

This sequence belongs to the class-II aminoacyl-tRNA synthetase family. Type-1 seryl-tRNA synthetase subfamily. Homodimer. The tRNA molecule binds across the dimer.

It is found in the cytoplasm. It catalyses the reaction tRNA(Ser) + L-serine + ATP = L-seryl-tRNA(Ser) + AMP + diphosphate + H(+). The catalysed reaction is tRNA(Sec) + L-serine + ATP = L-seryl-tRNA(Sec) + AMP + diphosphate + H(+). It participates in aminoacyl-tRNA biosynthesis; selenocysteinyl-tRNA(Sec) biosynthesis; L-seryl-tRNA(Sec) from L-serine and tRNA(Sec): step 1/1. Catalyzes the attachment of serine to tRNA(Ser). Is also able to aminoacylate tRNA(Sec) with serine, to form the misacylated tRNA L-seryl-tRNA(Sec), which will be further converted into selenocysteinyl-tRNA(Sec). This chain is Serine--tRNA ligase, found in Shewanella amazonensis (strain ATCC BAA-1098 / SB2B).